A 1628-amino-acid polypeptide reads, in one-letter code: THO complex subunit 2 (1628 aa).

Composition is skewed to basic and acidic residues over residues 1–10 (MTSLPEKDQQ) and 1360–1399 (TDNKNLVENKAVEKRVEARSSANERKQEERRRKTTPEGNR). Disordered regions lie at residues 1–21 (MTSLPEKDQQGEVSVSENQKK) and 1337–1628 (VALN…RKIQ). Phosphothreonine is present on residues threonine 1406 and threonine 1408. Positions 1411–1429 (DIQRSDSKLREDQSRDRTP) are enriched in basic and acidic residues. The segment covering 1430-1444 (QSRSFTNENNDNLRS) has biased composition (polar residues). Basic and acidic residues predominate over residues 1461–1474 (ARREHESQKSDRWR). The span at 1476 to 1493 (NGNVNRNPRVSNNNSTNV) shows a compositional bias: low complexity. Residues 1494 to 1526 (SRERSSEANHRTSNDNKRDEVTEGKDKNKRQDI) show a composition bias toward basic and acidic residues. Polar residues predominate over residues 1527-1550 (SGESNSRQNNAISRAGRSNGSNRG). Basic and acidic residues predominate over residues 1551-1560 (NDSRDADGRR). Serine 1577 carries the phosphoserine modification. A compositionally biased stretch (basic and acidic residues) spans 1581–1628 (LREEDERENSRRRARQDDRRDRDSRQQRDRPRDRTSRSAREEKRRKIQ).

The protein belongs to the THOC2 family. In terms of assembly, component of the THO complex. THO associates with DNA and RNA in vitro.

It localises to the nucleus. Functionally, component the THO subcomplex of the TREX complex, which operates in coupling transcription elongation to mRNA export. The THO complex is recruited to transcribed genes and moves along the gene with the elongating polymerase during transcription. THO is important for stabilizing nascent RNA in the RNA polymerase II elongation complex by preventing formation of DNA:RNA hybrids behind the elongating polymerase. The protein is THO complex subunit 2 (tho2) of Schizosaccharomyces pombe (strain 972 / ATCC 24843) (Fission yeast).